A 711-amino-acid chain; its full sequence is MMQESGSEAKSNGSTIQNGSSGGNHLLECGTLRDTRSNGEAPAVDLGAADLAHVQQQQQQALQVARQLLLQQQQQQQQQQQQQQQQQQQQQQQQQQQQQQQQQQQQQQQVSGLKSPKRNDKQPALQVPVSVAMMTPQVITPQQMQQILQQQVLSPQQLQVLLQQQQALMLQQQQLQEFYKKQQEQLQLQLLQQQHAGKQPKEQQQQQVATQQLAFQQQLLQMQQLQQQHLLSLQRQGLLTIQPGQPALPLQPLAQGMIPTELQQLWKEVTSAHTAEETTGSNHSSLDLTSTCVSSSAPSKTSLIMNPHASTNGQLSVHTPKRESLSHEEHPHSHPLYGHGVCKWPGCEAVCDDFPAFLKHLNSEHALDDRSTAQCRVQMQVVQQLELQLAKDKERLQAMMTHLHVKSTEPKAAPQPLNLVSSVTLSKSASEASPQSLPHTPTTPTAPLTPVTQGPSVITTTSMHTVGPIRRRYSDKYNVPISSADIAQNQEFYKNAEVRPPFTYASLIRQAILESPEKQLTLNEIYNWFTRMFAYFRRNAATWKNAVRHNLSLHKCFVRVENVKGAVWTVDEVEFQKRRPQKISGNPSLIKNMQSGHAYCTPLNAALQASMAENSIPLYTTASMGNPTLGSLASAIREELNGAMEHTNSNESDSSPGRSPMQAVHPIHVKEEPLDPEEAEGPLSLVTTANHSPDFDHDRDYEDEPVNEDME.

Polar residues predominate over residues 1–19 (MMQESGSEAKSNGSTIQNG). Residues 1–41 (MMQESGSEAKSNGSTIQNGSSGGNHLLECGTLRDTRSNGEA) form a disordered region. Phosphoserine is present on Ser115. Disordered stretches follow at residues 273 to 292 (HTAE…TSTC) and 305 to 332 (MNPH…EHPH). A compositionally biased stretch (polar residues) spans 305-317 (MNPHASTNGQLSV). Basic and acidic residues predominate over residues 320-332 (PKRESLSHEEHPH). Residue Lys321 forms a Glycyl lysine isopeptide (Lys-Gly) (interchain with G-Cter in SUMO2) linkage. The C2H2-type zinc-finger motif lies at 340 to 365 (GVCKWPGCEAVCDDFPAFLKHLNSEH). Residues 382-403 (VQQLELQLAKDKERLQAMMTHL) form a leucine-zipper region. Residues Lys406 and Lys411 each participate in a glycyl lysine isopeptide (Lys-Gly) (interchain with G-Cter in SUMO2) cross-link. The interval 416-420 (PLNLV) is CTBP1-binding. Polar residues predominate over residues 424–437 (TLSKSASEASPQSL). Positions 424–456 (TLSKSASEASPQSLPHTPTTPTAPLTPVTQGPS) are disordered. Residues 438–452 (PHTPTTPTAPLTPVT) show a composition bias toward low complexity. A Glycyl lysine isopeptide (Lys-Gly) (interchain with G-Cter in SUMO2) cross-link involves residue Lys476. The segment at residues 499 to 589 (RPPFTYASLI…PQKISGNPSL (91 aa)) is a DNA-binding region (fork-head). The segment at 645–711 (EHTNSNESDS…EDEPVNEDME (67 aa)) is disordered. Residues 646-657 (HTNSNESDSSPG) are compositionally biased toward polar residues. The residue at position 687 (Thr687) is a Phosphothreonine. Residue Ser692 is modified to Phosphoserine. Over residues 701 to 711 (YEDEPVNEDME) the composition is skewed to acidic residues.

Forms homodimers and heterodimers with FOXP2 and FOXP4. Dimerization is required for DNA-binding. Self-associates. Interacts with CTBP1. Interacts with NCOR2 and AR. Interacts with FOXP2. Interacts with TBR1. Interacts with AURKA; this interaction facilitates the phosphorylation of FOXP1, which suppresses the expression of FBXL7. Interacts with ZMYM2.

The protein localises to the nucleus. Its function is as follows. Transcriptional repressor. Can act with CTBP1 to synergistically repress transcription but CTPBP1 is not essential. Plays an important role in the specification and differentiation of lung epithelium. Acts cooperatively with FOXP4 to regulate lung secretory epithelial cell fate and regeneration by restricting the goblet cell lineage program; the function may involve regulation of AGR2. Essential transcriptional regulator of B-cell development. Involved in regulation of cardiac muscle cell proliferation. Involved in the columnar organization of spinal motor neurons. Promotes the formation of the lateral motor neuron column (LMC) and the preganglionic motor column (PGC) and is required for respective appropriate motor axon projections. The segment-appropriate generation of spinal cord motor columns requires cooperation with other Hox proteins. Can regulate PITX3 promoter activity; may promote midbrain identity in embryonic stem cell-derived dopamine neurons by regulating PITX3. Negatively regulates the differentiation of T follicular helper cells T(FH)s. Involved in maintenance of hair follicle stem cell quiescence; the function probably involves regulation of FGF18. Represses transcription of various pro-apoptotic genes and cooperates with NF-kappa B-signaling in promoting B-cell expansion by inhibition of caspase-dependent apoptosis. Binds to CSF1R promoter elements and is involved in regulation of monocyte differentiation and macrophage functions; repression of CSF1R in monocytes seems to involve NCOR2 as corepressor. Involved in endothelial cell proliferation, tube formation and migration indicative for a role in angiogenesis; the role in neovascularization seems to implicate suppression of SEMA5B. Can negatively regulate androgen receptor signaling. Acts as a transcriptional activator of the FBXL7 promoter; this activity is regulated by AURKA. The protein is Forkhead box protein P1 (Foxp1) of Rattus norvegicus (Rat).